Here is a 256-residue protein sequence, read N- to C-terminus: Large ribosomal subunit protein eL8A (256 aa).

The disordered stretch occupies residues 1 to 37 (MAPGKKVAPAPFGAKSTKSNKTRNPLTHSTPKNFGIG). Residues 16–32 (STKSNKTRNPLTHSTPK) show a composition bias toward polar residues.

The protein belongs to the eukaryotic ribosomal protein eL8 family. Component of the large ribosomal subunit (LSU). Mature yeast ribosomes consist of a small (40S) and a large (60S) subunit. The 40S small subunit contains 1 molecule of ribosomal RNA (18S rRNA) and 33 different proteins (encoded by 57 genes). The large 60S subunit contains 3 rRNA molecules (25S, 5.8S and 5S rRNA) and 46 different proteins (encoded by 81 genes).

It is found in the cytoplasm. Functionally, component of the ribosome, a large ribonucleoprotein complex responsible for the synthesis of proteins in the cell. The small ribosomal subunit (SSU) binds messenger RNAs (mRNAs) and translates the encoded message by selecting cognate aminoacyl-transfer RNA (tRNA) molecules. The large subunit (LSU) contains the ribosomal catalytic site termed the peptidyl transferase center (PTC), which catalyzes the formation of peptide bonds, thereby polymerizing the amino acids delivered by tRNAs into a polypeptide chain. The nascent polypeptides leave the ribosome through a tunnel in the LSU and interact with protein factors that function in enzymatic processing, targeting, and the membrane insertion of nascent chains at the exit of the ribosomal tunnel. This is Large ribosomal subunit protein eL8A from Saccharomyces cerevisiae (strain ATCC 204508 / S288c) (Baker's yeast).